The sequence spans 153 residues: ORM1-like protein 2 (153 aa).

At 1–21 the chain is on the cytoplasmic side; sequence MNVGVAHSEVNPNTRVMNSRG. 2 helical membrane-spanning segments follow: residues 22 to 42 and 43 to 63; these read IWLA…SIPF and FSIP…MYIF. Over 64 to 105 the chain is Cytoplasmic; it reads LHTVKGTPFETPDQGKARLLTHWEQMDYGLQFTSSRKFLSIS. Residues 106–126 traverse the membrane as a helical segment; sequence PIVLYLLASFYTKYDAAHFLI. Topologically, residues 127–153 are extracellular; sequence NTASLLSVLLPKLPQFHGVRLFGINKY.

It belongs to the ORM family. Ceramide-sensitive subunit of the serine palmitoyltransferase (SPT) complex, which is also composed of SPTLC1, SPTLC2/3 and SPTSSA/B.

Its subcellular location is the endoplasmic reticulum membrane. Functionally, plays an essential role in the homeostatic regulation of sphingolipid de novo biosynthesis by modulating the activity of the serine palmitoyltransferase (SPT) in response to ceramide levels. When complexed to SPT, the binding of ceramides to its N-terminus stabilizes a conformation that block SPT substrate entry, hence preventing SPT catalytic activity. Through this mechanism, maintains ceramide levels at sufficient concentrations for the production of complex sphingolipids, but which prevents the accumulation of ceramides to levels that trigger apoptosis. This Mus musculus (Mouse) protein is ORM1-like protein 2 (Ormdl2).